A 207-amino-acid chain; its full sequence is MADS-box protein AGL71 (207 aa).

An MADS-box domain is found at M1 to Q61. One can recognise a K-box domain in the interval L88–S178.

It is found in the nucleus. In terms of biological role, MADS-box transcription factor that acts with AGL42 and AGL72 in the control of flowering time. Promotes flowering at the shoot apical and axillary meristems. Seems to act through a gibberellin-dependent pathway. Interacts genetically with SOC1 and its expression is directly regulated by SOC1. This Arabidopsis thaliana (Mouse-ear cress) protein is MADS-box protein AGL71 (AGL71).